A 290-amino-acid chain; its full sequence is Concanavalin-A (290 aa).

An N-terminal signal peptide occupies residues 1-29; sequence MAISKKSSLFLPIFTFITMFLMVVNKVSS. 2 residues coordinate a carbohydrate: D119 and R139. D119 serves as a coordination point for Ca(2+). Positions 149-163 are excised as a propeptide; that stretch reads VIRNSTTIDFNAAYN. An N-linked (GlcNAc...) asparagine glycan is attached at N152. Mn(2+) contacts are provided by E171 and D173. Residues D173, Y175, N177, and D182 each coordinate Ca(2+). Positions 182 and 187 each coordinate Mn(2+). Position 262–263 (262–263) interacts with a carbohydrate; it reads LY. The propeptide occupies 282-290; that stretch reads EIPDIATVV.

The protein belongs to the leguminous lectin family. Homotetramer. In terms of processing, the mature chain consists of residues 164-281 followed by 30-148. To form a mature chain the precursor undergoes further post-translational modification after removal of the signal sequence; cleavage after Asn at positions Asn-148, Asn-163, and Asn-281 is followed by transposition and ligation (By formation of a new peptide bond) of residues 164-281 and 30-148.

Its function is as follows. Glucose/D-mannose/rhamnose specific lectin. Has hemagglutinating activity towards rabbit erythrocytes. Has mitogenic activity towards murine splenocytes that is inhibited by glucose. Inhibits HIV-1 reverse transcriptase with an IC(50) of 35 uM. Has a potent antiproliferative activity against L1210 leukemia cells in vitro that is not inhibited by glucose. Inhibits translation in cell-free rabbit reticulocyte system with an IC(50) of 2.08 uM. Lacks anti-fungal activity against M.arachidicola, B.cenera and F.oxysporum. This is Concanavalin-A from Canavalia gladiata (Sword bean).